A 1010-amino-acid chain; its full sequence is MATSSRSERFPITPSTAATNRLTITPNSRVLKSPLTEEIMWKRLKDAGFDEQSIKNRDKAALIAYIAKLESEVYDYQHNMGLLLLEKNELSSQYEEIKASVDESDLTHMREKSAYVSALAEAKKREESLKKDVGIAKECISSLEKTLHEMRAECAETKVSAGSTMSEAHVMIEDALKKLADAEAKMRAAEALQAEANRYHRIAERKLKEVESREDDLTRRLASFKSECETKENEMVIERQTLNERRKSLQQEHERLLDAQVSLNQREDHIFARSQELAELEKGLDTAKTTFEEERKAFEDKKSNLEIALALCAKREEAVSERESSLLKKEQELLVAEEKIASKESELIQNVLANQEVILRKRKSDVEAELECKSKSVEVEIESKRRAWELREVDIKQREDLVGEKEHDLEVQSRALAEKEKDITEKSFNLDEKEKNLVATEEDINRKTTMLEDEKERLRKLDLELQQSLTSLEDKRKRVDSATQKLEALKSETSELSTLEMKLKEELDDLRAQKLEMLAEADRLKVEKAKFEAEWEHIDVKREELRKEAEYITRQREAFSMYLKDERDNIKEERDALRNQHKNDVESLNREREEFMNKMVEEHSEWLSKIQRERADFLLGIEMQKRELEYCIENKREELENSSRDREKAFEQEKKLEEERIQSLKEMAEKELEHVQVELKRLDAERLEIKLDRERREREWAELKDSVEELKVQREKLETQRHMLRAERDEIRHEIEELKKLENLKVALDDMSMAKMQLSNLERSWEKVSALKQKVVSRDDELDLQNGVSTVSNSEDGYNSSMERQNGLTPSSATPFSWIKRCTNLIFKTSPEKSTLMHHYEEEGGVPSEKLKLESSRREEKAYTEGLSIAVERLEAGRKRRGNTSGDETSEPSNNKKRKHDVTQKYSDEADTQSVISSPQNVPEDKHELPSSQTQTPSGMVVISETVKITRVTCETEVTNKVTTLDCSESPSEAGRKMGEETEDGDCNQTGINASETVIHNEAATEDICT.

Coiled-coil stretches lie at residues 82-350 (LLLL…LIQN) and 404-763 (EKEH…NLER). 2 short sequence motifs (nuclear localization signal) span residues 445 to 452 (NRKTTMLE) and 679 to 686 (LKRLDAER). Disordered stretches follow at residues 787–813 (GVSTVSNSEDGYNSSMERQNGLTPSSA), 839–937 (HYEE…TQTP), and 966–994 (DCSESPSEAGRKMGEETEDGDCNQTGINA). Residues 849-863 (EKLKLESSRREEKAY) are compositionally biased toward basic and acidic residues. Composition is skewed to polar residues over residues 883-893 (NTSGDETSEPS) and 912-921 (TQSVISSPQN).

It belongs to the CRWN family. As to quaternary structure, core component of the LINC complex which is composed of inner nuclear membrane SUN domain-containing proteins coupled to outer nuclear membrane WIP proteins, the nucleoskeletal CRWN/LINC proteins, and, possibly, KAKU4. Binds to KAKU4. In terms of tissue distribution, expressed at low levels in roots, leaves, flowers and flower stalks.

The protein localises to the nucleus membrane. Its subcellular location is the nucleus. It localises to the nucleoplasm. The protein resides in the nucleus lamina. It is found in the cytoplasm. Component of SUN-protein-containing multivariate complexes also called LINC complexes which link the nucleoskeleton and cytoskeleton by providing versatile outer nuclear membrane attachment sites for cytoskeletal filaments. Required for nucleus structure organization (e.g. size and shape). Involved in the maintenance of interphase chromocenter integrity and organization. The protein is Protein CROWDED NUCLEI 4 of Arabidopsis thaliana (Mouse-ear cress).